The sequence spans 709 residues: MYYRTQQKPASVLGANGFTAEVGGRDRVRYFRPPVEVAGVPMRYSGIDTVRFSATAPTTPNLPRTFAETRFDRPTSMAAGLVGPPHHLPSLPRRAGAAPPHPVKAKSVKLPPQRTKRVEKLASTIGTDGKCDAAMQTVFRENEAQTLPYTPNYYIPEGGDPNPQVLGLMELHWNEGLPAGKEEVELIQRLRRRRAVEASLLDETSKEAKMENFCKLYDLEVKEREEREQHFENLRKRRLDQIHEALQERERARDELNRQRLEKVKEQRLANLQRVIEQMESKRVGMGRKALAEQASKAPAAAGRGLYAVDPIETFKRKPDLIQTYARRGTGAVEPQLCTNNGGGSASASPRRDRSRKPLRNYRQYDIQPAMLKYEGGIAELEANKIPKIQQIAPNAFAAPENHAINSLPSLYQRREATRVVEALEYVHAKIHKSDTPAETIRVLELYRATPRPQRPDTPTLELEGDVNEAVEESCTLLQRLLRGRAVQNDFFDGKERCRGLIEELQAASNAKYAERSAEEKQAEAEEKMREAIADSIGNEAQGDIICDTLDYLFHEMTRQQDLLALEALRHEAEAVRAEREAREAELRAQERILHDKEAVQYAAYVRAIEDIVECYSHDLYATVAEECAMEEAIEAECQRLEQLPPPTSNILSDPEVAENLVCDVLDNFVLPAVIDMVRMKPEELDRKAPAAAAAGFRQRSPNEKETKE.

3 disordered regions span residues 94–116 (RAGAAPPHPVKAKSVKLPPQRTK), 333–360 (VEPQLCTNNGGGSASASPRRDRSRKPLR), and 690–709 (PAAAAAGFRQRSPNEKETKE).

It belongs to the CFAP91 family.

It is found in the cytoplasm. The protein resides in the cytoskeleton. The protein localises to the flagellum axoneme. Functionally, axoneme-associated protein involved in flagellum motility and central pair positioning. The protein is Cilia- and flagella-associated protein 91 (CFAP91) of Trypanosoma brucei brucei (strain 927/4 GUTat10.1).